The chain runs to 1907 residues: Chromatin modification-related protein EAF1 B (1907 aa).

Disordered stretches follow at residues 108-208 (ASPH…TDLV), 261-287 (NRVSSNSLNTKVDGEPVVRESTAGSKT), 323-373 (GGSP…SHAN), and 449-469 (NQSHRSTAEMQTKEKSSETEK). The segment covering 140 to 151 (SENKSVEGERNL) has biased composition (basic and acidic residues). 3 stretches are compositionally biased toward polar residues: residues 261–270 (NRVSSNSLNT), 333–342 (GQKNSSTQLN), and 355–372 (TNRGATGTNGLESESSHA). The 79-residue stretch at 563-641 (CGTAPVEVRE…LSYAILQFWS (79 aa)) folds into the HSA domain. Disordered stretches follow at residues 836 to 909 (SSSL…AVQK) and 928 to 952 (AETSGKPKKKKKTHQGSAYDQTWHL). The segment covering 856–866 (RRVRTASRHRV) has biased composition (basic residues). Polar residues-rich tracts occupy residues 884–898 (TDASSGDTSSFQDEY) and 942–952 (QGSAYDQTWHL). Residues 1049 to 1105 (SGNPWSLFEDQALVVLVHDMGPNWELISDAMNSTLKIKYIYRNPTECKDRHKILMDK) form the SANT domain. 8 disordered regions span residues 1107–1131 (AGDGADSAEDSGNSQSYPSTLPGIP), 1235–1266 (PVLPTSGAHPSTPGSSGVVLSNNLPTTSGLQS), 1296–1319 (LSGRNLQQPSLSTPAAVSGSDRGH), 1429–1465 (GHLSQQHQMSPQSHVLGNSHHPHLQSPSQATGAQQEA), 1477–1594 (YLQQ…QQLN), 1638–1703 (VRPD…SPAT), 1767–1791 (VPQSVTNTTQTASMGTTKGMPQASN), and 1824–1907 (VNNS…TKVE). Polar residues-rich tracts occupy residues 1116-1125 (DSGNSQSYPS), 1242-1266 (AHPSTPGSSGVVLSNNLPTTSGLQS), 1296-1310 (LSGRNLQQPSLSTPA), 1431-1444 (LSQQHQMSPQSHVL), and 1453-1462 (QSPSQATGAQ). Positions 1493-1512 (PHVQQPQGSSVSSSSQNSPQ) are enriched in low complexity. Positions 1513 to 1529 (TQPPVSPQPLSMPPVSP) are enriched in pro residues. 8 stretches are compositionally biased toward polar residues: residues 1532 to 1545 (NINAMAQQKPQKSQ), 1554 to 1568 (SPQSGTSGVNNQAGK), 1585 to 1594 (RQPTQGQQLN), 1640 to 1655 (PDQQSSVGTTTSTDLQ), 1662 to 1672 (PLSSNHSQQLP), 1681 to 1703 (PSPQQQMQLHSDNSIQGQSSPAT), 1769 to 1782 (QSVTNTTQTASMGT), and 1824 to 1844 (VNNSNTDSAGNDPVSTPNQGL). 2 stretches are compositionally biased toward basic and acidic residues: residues 1863-1872 (SEEKRPKLPE) and 1882-1892 (LASEEQPHLEE).

The protein belongs to the EAF1 family. Component of the NuA4 histone acetyltransferase complex. Interacts with ARP4 and SWC4, and (via HSA domain) with TAF14 and TAF14B. Expressed in leaves.

Its subcellular location is the nucleus. Its function is as follows. Component of the NuA4 histone acetyltransferase complex which is involved in transcriptional activation of selected genes principally by acetylation of nucleosomal histone H4 and H2A. The protein is Chromatin modification-related protein EAF1 B (EAF1B) of Arabidopsis thaliana (Mouse-ear cress).